The following is a 294-amino-acid chain: Decaprenyl-diphosphate synthase subunit 2 (294 aa).

This sequence belongs to the FPP/GGPP synthase family. In terms of assembly, heterotetramer of 2 dps1 and 2 dlp1 subunits.

It localises to the mitochondrion. The catalysed reaction is 7 isopentenyl diphosphate + (2E,6E)-farnesyl diphosphate = all-trans-decaprenyl diphosphate + 7 diphosphate. The protein operates within cofactor biosynthesis; ubiquinone biosynthesis. In terms of biological role, supplies decaprenyl diphosphate, the precursor for the side chain of the isoprenoid quinones ubiquinone-10. The protein is Decaprenyl-diphosphate synthase subunit 2 (dlp1) of Schizosaccharomyces pombe (strain 972 / ATCC 24843) (Fission yeast).